A 121-amino-acid chain; its full sequence is UPF0102 protein Dhaf_3740 (121 aa).

This sequence belongs to the UPF0102 family.

The sequence is that of UPF0102 protein Dhaf_3740 from Desulfitobacterium hafniense (strain DSM 10664 / DCB-2).